The chain runs to 397 residues: Lysophospholipid transporter LplT (397 aa).

The Periplasmic segment spans residues Met-1–Lys-17. The chain crosses the membrane as a helical span at residues Ala-18–Leu-38. At Ala-39–Pro-52 the chain is on the cytoplasmic side. Residues Ile-53–Ala-73 traverse the membrane as a helical segment. Over Asp-74–Leu-90 the chain is Periplasmic. A helical membrane pass occupies residues Leu-91–Val-111. Residues Gly-112–Thr-144 are Cytoplasmic-facing. A helical transmembrane segment spans residues Ile-145 to Val-165. A topological domain (periplasmic) is located at residue Ala-166. A helical transmembrane segment spans residues Leu-167 to Leu-187. Topologically, residues Ala-188–Ser-226 are cytoplasmic. A helical membrane pass occupies residues Leu-227–Leu-247. Topologically, residues Gly-248–Thr-256 are periplasmic. A helical membrane pass occupies residues Tyr-257 to Val-277. Residues Thr-278–Glu-280 lie on the Cytoplasmic side of the membrane. The helical transmembrane segment at Thr-281 to Leu-301 threads the bilayer. The Periplasmic portion of the chain corresponds to Gln-302–Glu-304. A helical membrane pass occupies residues Leu-305–Pro-325. The Cytoplasmic portion of the chain corresponds to Leu-326–Ala-343. Residues Ile-344 to Leu-364 traverse the membrane as a helical segment. Residues Ala-365 to Val-366 are Periplasmic-facing. Residues Met-367–Ile-387 form a helical membrane-spanning segment. Residues Thr-388–His-397 lie on the Cytoplasmic side of the membrane.

Belongs to the major facilitator superfamily. LplT (TC 2.A.1.42) family.

It is found in the cell inner membrane. Functionally, catalyzes the facilitated diffusion of 2-acyl-glycero-3-phosphoethanolamine (2-acyl-GPE) into the cell. The protein is Lysophospholipid transporter LplT of Escherichia coli O81 (strain ED1a).